The sequence spans 237 residues: Glutathione S-transferase psoE (237 aa).

The region spanning 2–79 (VFGTLYTFPG…YITSQNEQTT (78 aa)) is the GST N-terminal domain. Residues arginine 37, lysine 49, valine 50, glutamate 63, cysteine 64, and asparagine 99 each contribute to the glutathione site. Lysine 49 is a binding site for substrate. The GST C-terminal domain occupies 84–222 (DKKEYAEIIK…NNPPEKKPET (139 aa)). Glutamine 108 is a substrate binding site. Positions 208–222 (EPKLTNNPPEKKPET) are enriched in basic and acidic residues. The disordered stretch occupies residues 208–237 (EPKLTNNPPEKKPETVPKNGAAVAIEATQA).

Belongs to the GST superfamily. Glutathione serves as cofactor.

Its pathway is secondary metabolite biosynthesis. In terms of biological role, glutathione S-transferase; part of the gene cluster that mediates the biosynthesis of pseurotin A, a competitive inhibitor of chitin synthase and an inducer of nerve-cell proliferation. The PKS-NRPS hybrid synthetase psoA is responsible for the biosynthesis of azaspirene, one of the first intermediates having the 1-oxa-7-azaspiro[4,4]-non-2-ene-4,6-dione core of pseurotin, via condensation of one acetyl-CoA, 4 malonyl-CoA, and a L-phenylalanine molecule. The dual-functional monooxygenase/methyltransferase psoF seems to be involved in the addition of the C3 methyl group onto the pseurotin scaffold. Azaspirene is then converted to synerazol through 4 steps including oxidation of C17 by the cytochrome P450 monooxygenase psoD, O-methylation of the hydroxy group of C8 by the methyltransferase psoC, and the trans-to-cis isomerization of the C13 olefin by the glutathione S-transferase psoE. The fourth step of synerazol production is performed by the dual-functional monooxygenase/methyltransferase psoF which seems to catalyze the epoxidation of the intermediate deepoxy-synerazol. Synerazol can be attacked by a water molecule nonenzymatically at two different positions to yield two diol products, pseurotin A and pseurotin D. The polypeptide is Glutathione S-transferase psoE (Aspergillus fumigatus (strain ATCC MYA-4609 / CBS 101355 / FGSC A1100 / Af293) (Neosartorya fumigata)).